The following is a 323-amino-acid chain: CTD kinase subunit beta (323 aa).

This sequence belongs to the cyclin family. In terms of assembly, CTDK-I consists of three subunits, CTK1, CTK2 and CTK3 (also called alpha, beta and gamma). Interacts with CTK1. Heterodimerization with CTK3 is required to protect this subunit from degradation. Post-translationally, phosphorylated. Ubiquitinated. Phosphorylation and ubiquitination lead to degradation in growth-related way by the ubiquitin-proteasome pathway. Neither phosphorylation nor degradation requires association with CTK1.

It is found in the nucleus. The protein localises to the nucleolus. In terms of biological role, cyclin subunit of the CTDK-I complex, which hyperphosphorylates the C-terminal heptapeptide repeat domain (CTD) of the largest RNA polymerase II subunit. CTDK-I phosphorylates 'Ser-5' if the CTD substrate is not phosphorylated at 'Ser-5', but will phosphorylate 'Ser-2' of a CTD substrate if 'Ser-5' is already phosphorylated. CTDK-I is also more reactive toward substrates that are prephosphorylated at 'Ser-2' or 'Ser-5' compared with an unphosphorylated CTD substrate, therefore efficiently creating doubly phosphorylated CTD repeats. Involved in RNA polymerase II transcriptional elongation, and as part of the CTDK-I complex, pre-mRNA 3'-end processing and SET2 mediated H3K36 methylation. Together with CTK3, required for CTK1 CTD kinase activation. Required for DNA damage induced transcription. Involved in the adaptation to alternative carbon sources, including galactose, glycerol and ethanol, but not raffinose. Required for the integrity of the rDNA locus. The chain is CTD kinase subunit beta (CTK2) from Saccharomyces cerevisiae (strain ATCC 204508 / S288c) (Baker's yeast).